The following is a 221-amino-acid chain: 7-cyano-7-deazaguanine synthase (221 aa).

10–20 (FSGGQDSTTCL) contributes to the ATP binding site. Residues C186, C195, C198, and C201 each coordinate Zn(2+).

It belongs to the QueC family. Homodimer. Requires Zn(2+) as cofactor.

It carries out the reaction 7-carboxy-7-deazaguanine + NH4(+) + ATP = 7-cyano-7-deazaguanine + ADP + phosphate + H2O + H(+). Its pathway is purine metabolism; 7-cyano-7-deazaguanine biosynthesis. In terms of biological role, catalyzes the ATP-dependent conversion of 7-carboxy-7-deazaguanine (CDG) to 7-cyano-7-deazaguanine (preQ(0)). This chain is 7-cyano-7-deazaguanine synthase, found in Geobacillus kaustophilus (strain HTA426).